Consider the following 501-residue polypeptide: Bifunctional purine biosynthesis protein PurH (501 aa).

Positions 1 to 144 (MKKRALISVF…KNFKDVVVLS (144 aa)) constitute an MGS-like domain.

The protein belongs to the PurH family.

The enzyme catalyses (6R)-10-formyltetrahydrofolate + 5-amino-1-(5-phospho-beta-D-ribosyl)imidazole-4-carboxamide = 5-formamido-1-(5-phospho-D-ribosyl)imidazole-4-carboxamide + (6S)-5,6,7,8-tetrahydrofolate. The catalysed reaction is IMP + H2O = 5-formamido-1-(5-phospho-D-ribosyl)imidazole-4-carboxamide. It functions in the pathway purine metabolism; IMP biosynthesis via de novo pathway; 5-formamido-1-(5-phospho-D-ribosyl)imidazole-4-carboxamide from 5-amino-1-(5-phospho-D-ribosyl)imidazole-4-carboxamide (10-formyl THF route): step 1/1. It participates in purine metabolism; IMP biosynthesis via de novo pathway; IMP from 5-formamido-1-(5-phospho-D-ribosyl)imidazole-4-carboxamide: step 1/1. The chain is Bifunctional purine biosynthesis protein PurH from Clostridium perfringens (strain ATCC 13124 / DSM 756 / JCM 1290 / NCIMB 6125 / NCTC 8237 / Type A).